Consider the following 162-residue polypeptide: Cytochrome c-type biogenesis protein CcmE (162 aa).

At methionine 1–arginine 8 the chain is on the cytoplasmic side. A helical; Signal-anchor for type II membrane protein transmembrane segment spans residues leucine 9–alanine 29. At leucine 30 to lysine 162 the chain is on the periplasmic side. Heme is bound by residues histidine 131 and tyrosine 135. Positions glutamate 139–lysine 162 are disordered. Residues tyrosine 153–lysine 162 are compositionally biased toward polar residues.

It belongs to the CcmE/CycJ family.

The protein localises to the cell inner membrane. Functionally, heme chaperone required for the biogenesis of c-type cytochromes. Transiently binds heme delivered by CcmC and transfers the heme to apo-cytochromes in a process facilitated by CcmF and CcmH. This is Cytochrome c-type biogenesis protein CcmE from Shewanella putrefaciens (strain CN-32 / ATCC BAA-453).